Reading from the N-terminus, the 231-residue chain is Cytidylate kinase 1 (231 aa).

An ATP-binding site is contributed by 7 to 15 (GPSGAGKGT).

It belongs to the cytidylate kinase family. Type 1 subfamily.

It is found in the cytoplasm. It carries out the reaction CMP + ATP = CDP + ADP. The enzyme catalyses dCMP + ATP = dCDP + ADP. The chain is Cytidylate kinase 1 from Haemophilus influenzae (strain ATCC 51907 / DSM 11121 / KW20 / Rd).